The primary structure comprises 193 residues: Large ribosomal subunit protein bL12cy (193 aa).

The transit peptide at 1–59 (MAATTLSIATTIRSSSFSSGLASAHHFPSRPLSIEFPFSFGVSSSSTLSHRAIYLHPIS) directs the protein to the chloroplast. Residues 170–187 (GVTKDEAEEDKTQLEEAG) are compositionally biased toward basic and acidic residues. The segment at 170 to 193 (GVTKDEAEEDKTQLEEAGAKVSIV) is disordered.

The protein belongs to the bacterial ribosomal protein bL12 family.

Its subcellular location is the plastid. It localises to the chloroplast. The polypeptide is Large ribosomal subunit protein bL12cy (RPL12B) (Arabidopsis thaliana (Mouse-ear cress)).